The primary structure comprises 344 residues: Ferrochelatase (344 aa).

Fe cation contacts are provided by histidine 214 and glutamate 295.

The protein belongs to the ferrochelatase family.

Its subcellular location is the cytoplasm. It carries out the reaction heme b + 2 H(+) = protoporphyrin IX + Fe(2+). Its pathway is porphyrin-containing compound metabolism; protoheme biosynthesis; protoheme from protoporphyrin-IX: step 1/1. Functionally, catalyzes the ferrous insertion into protoporphyrin IX. The polypeptide is Ferrochelatase (Allorhizobium ampelinum (strain ATCC BAA-846 / DSM 112012 / S4) (Agrobacterium vitis (strain S4))).